We begin with the raw amino-acid sequence, 556 residues long: 3-phosphoinositide-dependent protein kinase 1 (556 aa).

Phosphotyrosine; by SRC and INSR is present on tyrosine 9. Serine 25 is subject to Phosphoserine. The tract at residues 26 to 80 (PSMVRTQTESSTPPGIPGGSRQGPAMDGTAAEPRPGAGSLQHAQPPPQPRKKRPE) is disordered. Polar residues predominate over residues 28-38 (MVRTQTESSTP). Residues 82-342 (FKFGKILGEG…YGPLKAHPFF (261 aa)) form the Protein kinase domain. Residues 92-94 (SFS) and lysine 111 contribute to the ATP site. The interval 113–157 (LEKRHIIKENKVPYVTRERDVMSRLDHPFFVKLYFTFQDDEKLYF) is PIF-pocket. Residues 160–162 (SYA) and glutamate 166 contribute to the ATP site. Aspartate 205 functions as the Proton acceptor in the catalytic mechanism. 2 residues coordinate ATP: glutamate 209 and aspartate 223. A Phosphoserine; by autocatalysis modification is found at serine 241. Lysine 304 is subject to N6-acetyllysine. Threonine 354 carries the phosphothreonine; by MELK modification. Phosphotyrosine; by SRC and INSR is present on residues tyrosine 373 and tyrosine 376. The residue at position 393 (serine 393) is a Phosphoserine. Serine 394 is subject to Phosphoserine; by MAP3K5. Serine 396 is modified (phosphoserine). At serine 398 the chain carries Phosphoserine; by MAP3K5. A Phosphoserine modification is found at serine 410. A PH domain is found at 459–550 (KMGPVDKRKG…EVWRQRYQSH (92 aa)). Position 501 is a phosphoserine; by PKC/PRKCQ (serine 501). Threonine 513 is subject to Phosphothreonine; by autocatalysis. Residue serine 529 is modified to Phosphoserine; by PKC/PRKCQ.

Belongs to the protein kinase superfamily. AGC Ser/Thr protein kinase family. PDPK1 subfamily. Homodimer in its autoinhibited state. Active as monomer. Interacts with NPRL2, PPARG, PAK1, PTK2B, GRB14, PKN1 (via C-terminus), STRAP and IKKB. The Tyr-9 phosphorylated form interacts with SRC, RASA1 and CRK (via their SH2 domains). Interacts with SGK3 in a phosphorylation-dependent manner. The tyrosine-phosphorylated form interacts with PTPN6. The Ser-241 phosphorylated form interacts with YWHAH and YWHAQ. Binds INSR in response to insulin. Interacts (via PH domain) with SMAD3, SMAD4 and SMAD7. Interacts with PKN2; the interaction stimulates PDPK1 autophosphorylation, its PI(3,4,5)P3-dependent kinase activity toward 'Ser-473' of AKT1 but also activates its kinase activity toward PRKCD and PRKCZ. Post-translationally, phosphorylation on Ser-241 in the activation loop is required for full activity. PDPK1 itself can autophosphorylate Ser-241, leading to its own activation. Autophosphorylation is inhibited by the apoptotic C-terminus cleavage product of PKN2. Tyr-9 phosphorylation is critical for stabilization of both PDPK1 and the PDPK1/SRC complex via HSP90-mediated protection of PDPK1 degradation. Angiotensin II stimulates the tyrosine phosphorylation of PDPK1 in vascular smooth muscle in a calcium- and SRC-dependent manner. Phosphorylated on Tyr-9, Tyr-373 and Tyr-376 by INSR in response to insulin. Palmitate negatively regulates autophosphorylation at Ser-241 and palmitate-induced phosphorylation at Ser-529 and Ser-501 by PKC/PRKCQ negatively regulates its ability to phosphorylate PKB/AKT1. Phosphorylation at Thr-354 by MELK partially inhibits kinase activity, the inhibition is cooperatively enhanced by phosphorylation at Ser-394 and Ser-398 by MAP3K5. In terms of processing, autophosphorylated; autophosphorylation is inhibited by the apoptotic C-terminus cleavage product of PKN2. Monoubiquitinated in the kinase domain, deubiquitinated by USP4. As to expression, appears to be expressed ubiquitously. The Tyr-9 phosphorylated form is markedly increased in diseased tissue compared with normal tissue from lung, liver, colon and breast.

The protein resides in the cytoplasm. Its subcellular location is the nucleus. It is found in the cell membrane. The protein localises to the cell junction. It localises to the focal adhesion. The enzyme catalyses L-seryl-[protein] + ATP = O-phospho-L-seryl-[protein] + ADP + H(+). It carries out the reaction L-threonyl-[protein] + ATP = O-phospho-L-threonyl-[protein] + ADP + H(+). Homodimerization regulates its activity by maintaining the kinase in an autoinhibitory conformation. NPRL2 down-regulates its activity by interfering with tyrosine phosphorylation at the Tyr-9, Tyr-373 and Tyr-376 residues. The 14-3-3 protein YWHAQ acts as a negative regulator by association with the residues surrounding the Ser-241 residue. STRAP positively regulates its activity by enhancing its autophosphorylation and by stimulating its dissociation from YWHAQ. SMAD2, SMAD3, SMAD4 and SMAD7 also positively regulate its activity by stimulating its dissociation from YWHAQ. Activated by phosphorylation on Tyr-9, Tyr-373 and Tyr-376 by INSR in response to insulin. Functionally, serine/threonine kinase which acts as a master kinase, phosphorylating and activating a subgroup of the AGC family of protein kinases. Its targets include: protein kinase B (PKB/AKT1, PKB/AKT2, PKB/AKT3), p70 ribosomal protein S6 kinase (RPS6KB1), p90 ribosomal protein S6 kinase (RPS6KA1, RPS6KA2 and RPS6KA3), cyclic AMP-dependent protein kinase (PRKACA), protein kinase C (PRKCD and PRKCZ), serum and glucocorticoid-inducible kinase (SGK1, SGK2 and SGK3), p21-activated kinase-1 (PAK1), TSSK3, protein kinase PKN (PKN1 and PKN2). Plays a central role in the transduction of signals from insulin by providing the activating phosphorylation to PKB/AKT1, thus propagating the signal to downstream targets controlling cell proliferation and survival, as well as glucose and amino acid uptake and storage. Negatively regulates the TGF-beta-induced signaling by: modulating the association of SMAD3 and SMAD7 with TGF-beta receptor, phosphorylating SMAD2, SMAD3, SMAD4 and SMAD7, preventing the nuclear translocation of SMAD3 and SMAD4 and the translocation of SMAD7 from the nucleus to the cytoplasm in response to TGF-beta. Activates PPARG transcriptional activity and promotes adipocyte differentiation. Activates the NF-kappa-B pathway via phosphorylation of IKKB. The tyrosine phosphorylated form is crucial for the regulation of focal adhesions by angiotensin II. Controls proliferation, survival, and growth of developing pancreatic cells. Participates in the regulation of Ca(2+) entry and Ca(2+)-activated K(+) channels of mast cells. Essential for the motility of vascular endothelial cells (ECs) and is involved in the regulation of their chemotaxis. Plays a critical role in cardiac homeostasis by serving as a dual effector for cell survival and beta-adrenergic response. Plays an important role during thymocyte development by regulating the expression of key nutrient receptors on the surface of pre-T cells and mediating Notch-induced cell growth and proliferative responses. Provides negative feedback inhibition to toll-like receptor-mediated NF-kappa-B activation in macrophages. Its function is as follows. Catalytically inactive. This is 3-phosphoinositide-dependent protein kinase 1 (PDPK1) from Homo sapiens (Human).